We begin with the raw amino-acid sequence, 310 residues long: Phosphoribosylaminoimidazole-succinocarboxamide synthase (310 aa).

This sequence belongs to the SAICAR synthetase family.

It carries out the reaction 5-amino-1-(5-phospho-D-ribosyl)imidazole-4-carboxylate + L-aspartate + ATP = (2S)-2-[5-amino-1-(5-phospho-beta-D-ribosyl)imidazole-4-carboxamido]succinate + ADP + phosphate + 2 H(+). It participates in purine metabolism; IMP biosynthesis via de novo pathway; 5-amino-1-(5-phospho-D-ribosyl)imidazole-4-carboxamide from 5-amino-1-(5-phospho-D-ribosyl)imidazole-4-carboxylate: step 1/2. The chain is Phosphoribosylaminoimidazole-succinocarboxamide synthase from Xanthomonas campestris pv. campestris (strain B100).